A 107-amino-acid chain; its full sequence is Iron-binding protein IscA (107 aa).

Fe cation-binding residues include Cys-35, Cys-99, and Cys-101.

Belongs to the HesB/IscA family. As to quaternary structure, homodimer; may form tetramers and higher multimers. The cofactor is Fe cation.

Functionally, is able to transfer iron-sulfur clusters to apo-ferredoxin. Multiple cycles of [2Fe2S] cluster formation and transfer are observed, suggesting that IscA acts catalytically. Recruits intracellular free iron so as to provide iron for the assembly of transient iron-sulfur cluster in IscU in the presence of IscS, L-cysteine and the thioredoxin reductase system TrxA/TrxB. The sequence is that of Iron-binding protein IscA from Klebsiella pneumoniae (strain 342).